A 492-amino-acid polypeptide reads, in one-letter code: Ketol-acid reductoisomerase (NADP(+)) (492 aa).

In terms of domain architecture, KARI N-terminal Rossmann spans 14 to 208 (LDQLGRCRFM…GGHKAGVLES (195 aa)). NADP(+) contacts are provided by residues 45–48 (CGAQ), Arg68, Arg76, Ser78, and 108–110 (DKQ). His132 is an active-site residue. Gly158 is an NADP(+) binding site. KARI C-terminal knotted domains are found at residues 209–344 (SFVA…NAPK) and 345–485 (YDGK…MTDM). Residues Asp217, Glu221, Glu389, and Glu393 each coordinate Mg(2+). Ser414 provides a ligand contact to substrate.

The protein belongs to the ketol-acid reductoisomerase family. Mg(2+) serves as cofactor.

It catalyses the reaction (2R)-2,3-dihydroxy-3-methylbutanoate + NADP(+) = (2S)-2-acetolactate + NADPH + H(+). It carries out the reaction (2R,3R)-2,3-dihydroxy-3-methylpentanoate + NADP(+) = (S)-2-ethyl-2-hydroxy-3-oxobutanoate + NADPH + H(+). The protein operates within amino-acid biosynthesis; L-isoleucine biosynthesis; L-isoleucine from 2-oxobutanoate: step 2/4. It functions in the pathway amino-acid biosynthesis; L-valine biosynthesis; L-valine from pyruvate: step 2/4. Its function is as follows. Involved in the biosynthesis of branched-chain amino acids (BCAA). Catalyzes an alkyl-migration followed by a ketol-acid reduction of (S)-2-acetolactate (S2AL) to yield (R)-2,3-dihydroxy-isovalerate. In the isomerase reaction, S2AL is rearranged via a Mg-dependent methyl migration to produce 3-hydroxy-3-methyl-2-ketobutyrate (HMKB). In the reductase reaction, this 2-ketoacid undergoes a metal-dependent reduction by NADPH to yield (R)-2,3-dihydroxy-isovalerate. This Haemophilus influenzae (strain 86-028NP) protein is Ketol-acid reductoisomerase (NADP(+)).